The chain runs to 90 residues: MQNSAEKEEFKGYLEKSGVIDALTKVLVGLYEESDKPSDALEFIKKHLGNSLGIDVDALKQENADLKAEVSALTQRVDDLSKKLEAANKQ.

This sequence belongs to the AMY1 family.

It is found in the nucleus. In Dictyostelium discoideum (Social amoeba), this protein is c-Myc-binding protein homolog (mycbp).